Here is a 148-residue protein sequence, read N- to C-terminus: Lysozyme C (148 aa).

Positions Met1–Gly18 are cleaved as a signal peptide. One can recognise a C-type lysozyme domain in the interval Lys19–Val148. Disulfide bonds link Cys24–Cys146, Cys48–Cys134, Cys83–Cys99, and Cys95–Cys113. Active-site residues include Glu53 and Asp71.

This sequence belongs to the glycosyl hydrolase 22 family. Monomer.

It catalyses the reaction Hydrolysis of (1-&gt;4)-beta-linkages between N-acetylmuramic acid and N-acetyl-D-glucosamine residues in a peptidoglycan and between N-acetyl-D-glucosamine residues in chitodextrins.. Lysozymes have primarily a bacteriolytic function; those in tissues and body fluids are associated with the monocyte-macrophage system and enhance the activity of immunoagents. This Halichoerus grypus (Gray seal) protein is Lysozyme C (LYZ).